We begin with the raw amino-acid sequence, 331 residues long: Nucleotide sugar transporter SLC35B4 (331 aa).

Transmembrane regions (helical) follow at residues 4–24 (ALAV…LELL), 30–50 (GCGN…GFLF), 59–79 (PAIP…VSVV), 92–112 (LHMI…IIIL), 117–137 (SIFK…CTFM), 153–173 (GFQA…ALLM), 201–221 (ALPL…AVLF), 229–249 (IPVI…NIIT), 251–267 (YVCI…CASL), 268–288 (TVTL…ILYF), and 291–311 (PFTL…LMYT). The Mediates endoplasmic reticulum retention signature appears at 326 to 331 (KDSKKN).

It belongs to the nucleotide-sugar transporter family. SLC35B subfamily.

The protein localises to the endoplasmic reticulum membrane. It catalyses the reaction UDP-N-acetyl-alpha-D-glucosamine(in) + UDP-alpha-D-glucuronate(out) = UDP-N-acetyl-alpha-D-glucosamine(out) + UDP-alpha-D-glucuronate(in). The catalysed reaction is UDP-alpha-D-xylose(in) + UDP-alpha-D-glucuronate(out) = UDP-alpha-D-xylose(out) + UDP-alpha-D-glucuronate(in). In terms of biological role, antiporter that transports nucleotide sugars across the endoplasmic reticulum (ER) membrane in exchange for another nucleotide sugar. May couple UDP-alpha-D-glucuronate (UDP-GlcA) or UDP-alpha-D-xylose (UDP-Xyl) efflux to UDP-alpha-D-glucuronate (UDP-GlcA) influx into the ER lumen, which in turn stimulates glucuronidation and excretion of endobiotics and xenobiotics. Has UDP-GlcA:UDP-GlcNAc antiporter activity. This is Nucleotide sugar transporter SLC35B4 (SLC35B4) from Homo sapiens (Human).